Here is a 117-residue protein sequence, read N- to C-terminus: Ig heavy chain V region UPC10 (117 aa).

Residues 1–116 (EVKLLESGGG…WGQVTTLTVS (116 aa)) form the Ig-like domain.

The protein is Ig heavy chain V region UPC10 of Mus musculus (Mouse).